Consider the following 100-residue polypeptide: Urease subunit gamma (100 aa).

The protein belongs to the urease gamma subunit family. Heterotrimer of UreA (gamma), UreB (beta) and UreC (alpha) subunits. Three heterotrimers associate to form the active enzyme.

It is found in the cytoplasm. It carries out the reaction urea + 2 H2O + H(+) = hydrogencarbonate + 2 NH4(+). The protein operates within nitrogen metabolism; urea degradation; CO(2) and NH(3) from urea (urease route): step 1/1. This chain is Urease subunit gamma, found in Granulibacter bethesdensis (strain ATCC BAA-1260 / CGDNIH1).